Here is a 148-residue protein sequence, read N- to C-terminus: Cysteine proteinase inhibitor 5 (148 aa).

The signal sequence occupies residues 1–25 (MASKLYYAVAPLVLVLLLLAPLSSA). The short motif at 99-103 (QVVSG) is the Secondary area of contact element.

It belongs to the cystatin family. Phytocystatin subfamily.

It is found in the secreted. Its function is as follows. Specific inhibitor of cysteine proteinases. Probably involved in the regulation of endogenous processes and in defense against pests and pathogens. This chain is Cysteine proteinase inhibitor 5, found in Oryza sativa subsp. japonica (Rice).